Here is a 367-residue protein sequence, read N- to C-terminus: MNLLTVSTDLISIFLFTTLFLFFARKVAKKVGLVDKPNFRKRHQGLIPLVGGISVYAGICFTFGIVDYYIPHASLYLACAGVLVFIGALDDRFDISVKIRATIQAAVGIVMMVFGKLYLSSLGYIFGSWEMVLGPFGYFLTLFAVWAAINAFNMVDGIDGLLGGLSCVSFAAIGMILWFDGQTSLAIWCFAMIAAILPYIMLNLGILGRRYKVFMGDAGSTLIGFTVIWILLETTQGKTHPISPVTALWIIAIPLMDMVAIMYRRLRKGMSPFSPDRQHIHHLIMRAGFTSRQAFVLITLAAALLASIGVLAEYSHFVPEWVMLVLFLLAFFLYGYCIKRAWKVARFIKRVKRRLRRNRGGSPNLTK.

The next 10 membrane-spanning stretches (helical) occupy residues 3-23, 46-66, 69-89, 132-152, 158-178, 187-207, 213-233, 242-262, 294-314, and 318-338; these read LLTV…FLFF, LIPL…FGIV, YIPH…IGAL, VLGP…INAF, IDGL…MILW, IWCF…LGIL, VFMG…ILLE, ISPV…VAIM, AFVL…LAEY, and VPEW…GYCI.

It belongs to the glycosyltransferase 4 family. WecA subfamily. Mg(2+) is required as a cofactor. Mn(2+) serves as cofactor.

It localises to the cell inner membrane. It catalyses the reaction di-trans,octa-cis-undecaprenyl phosphate + UDP-N-acetyl-alpha-D-glucosamine = N-acetyl-alpha-D-glucosaminyl-di-trans,octa-cis-undecaprenyl diphosphate + UMP. It participates in bacterial outer membrane biogenesis; LPS O-antigen biosynthesis. The protein operates within bacterial outer membrane biogenesis; enterobacterial common antigen biosynthesis. Functionally, catalyzes the transfer of the GlcNAc-1-phosphate moiety from UDP-GlcNAc onto the carrier lipid undecaprenyl phosphate (C55-P), yielding GlcNAc-pyrophosphoryl-undecaprenyl (GlcNAc-PP-C55). This is Undecaprenyl-phosphate alpha-N-acetylglucosaminyl 1-phosphate transferase from Escherichia coli O6:H1 (strain CFT073 / ATCC 700928 / UPEC).